Reading from the N-terminus, the 515-residue chain is Bifunctional purine biosynthesis protein PurH (515 aa).

Residues 1 to 145 (MTKRALISVS…KNHASVTVVV (145 aa)) form the MGS-like domain.

This sequence belongs to the PurH family.

The enzyme catalyses (6R)-10-formyltetrahydrofolate + 5-amino-1-(5-phospho-beta-D-ribosyl)imidazole-4-carboxamide = 5-formamido-1-(5-phospho-D-ribosyl)imidazole-4-carboxamide + (6S)-5,6,7,8-tetrahydrofolate. The catalysed reaction is IMP + H2O = 5-formamido-1-(5-phospho-D-ribosyl)imidazole-4-carboxamide. It participates in purine metabolism; IMP biosynthesis via de novo pathway; 5-formamido-1-(5-phospho-D-ribosyl)imidazole-4-carboxamide from 5-amino-1-(5-phospho-D-ribosyl)imidazole-4-carboxamide (10-formyl THF route): step 1/1. Its pathway is purine metabolism; IMP biosynthesis via de novo pathway; IMP from 5-formamido-1-(5-phospho-D-ribosyl)imidazole-4-carboxamide: step 1/1. This is Bifunctional purine biosynthesis protein PurH from Streptococcus agalactiae serotype III (strain NEM316).